The following is a 575-amino-acid chain: Dihydroxy-acid dehydratase (575 aa).

Residues 1 to 25 (MPTTDSARAADIKQPDIKPRSRDVT) are disordered. Over residues 8–25 (RAADIKQPDIKPRSRDVT) the composition is skewed to basic and acidic residues. Residue Cys-64 participates in [2Fe-2S] cluster binding. Residue Asp-96 participates in Mg(2+) binding. Cys-137 contributes to the [2Fe-2S] cluster binding site. Positions 138 and 139 each coordinate Mg(2+). Lys-139 carries the N6-carboxylysine modification. Cys-214 serves as a coordination point for [2Fe-2S] cluster. Glu-465 lines the Mg(2+) pocket. Ser-491 serves as the catalytic Proton acceptor.

The protein belongs to the IlvD/Edd family. As to quaternary structure, homodimer. Requires [2Fe-2S] cluster as cofactor. It depends on Mg(2+) as a cofactor.

It catalyses the reaction (2R)-2,3-dihydroxy-3-methylbutanoate = 3-methyl-2-oxobutanoate + H2O. It carries out the reaction (2R,3R)-2,3-dihydroxy-3-methylpentanoate = (S)-3-methyl-2-oxopentanoate + H2O. It functions in the pathway amino-acid biosynthesis; L-isoleucine biosynthesis; L-isoleucine from 2-oxobutanoate: step 3/4. It participates in amino-acid biosynthesis; L-valine biosynthesis; L-valine from pyruvate: step 3/4. Its function is as follows. Functions in the biosynthesis of branched-chain amino acids. Catalyzes the dehydration of (2R,3R)-2,3-dihydroxy-3-methylpentanoate (2,3-dihydroxy-3-methylvalerate) into 2-oxo-3-methylpentanoate (2-oxo-3-methylvalerate) and of (2R)-2,3-dihydroxy-3-methylbutanoate (2,3-dihydroxyisovalerate) into 2-oxo-3-methylbutanoate (2-oxoisovalerate), the penultimate precursor to L-isoleucine and L-valine, respectively. The protein is Dihydroxy-acid dehydratase of Mycolicibacterium paratuberculosis (strain ATCC BAA-968 / K-10) (Mycobacterium paratuberculosis).